We begin with the raw amino-acid sequence, 66 residues long: Large ribosomal subunit protein bL28 (66 aa).

The disordered stretch occupies residues 1–26 (MAKDAITGARTRFGNQRSHALNSSRR). Polar residues predominate over residues 13 to 25 (FGNQRSHALNSSR).

It belongs to the bacterial ribosomal protein bL28 family.

This Leuconostoc mesenteroides subsp. mesenteroides (strain ATCC 8293 / DSM 20343 / BCRC 11652 / CCM 1803 / JCM 6124 / NCDO 523 / NBRC 100496 / NCIMB 8023 / NCTC 12954 / NRRL B-1118 / 37Y) protein is Large ribosomal subunit protein bL28.